The chain runs to 52 residues: UPF0181 protein NTHI1697 (52 aa).

The protein belongs to the UPF0181 family.

This chain is UPF0181 protein NTHI1697, found in Haemophilus influenzae (strain 86-028NP).